The sequence spans 515 residues: GMP synthase [glutamine-hydrolyzing] (515 aa).

The 191-residue stretch at 10 to 200 (TIIVLDFGSQ…VFGVCGCSEG (191 aa)) folds into the Glutamine amidotransferase type-1 domain. C87 (nucleophile) is an active-site residue. Active-site residues include H174 and E176. Residues 201-390 (WNMENFIEVE…LGIPDEIVWR (190 aa)) enclose the GMPS ATP-PPase domain. 228–234 (SGGVDSS) lines the ATP pocket.

As to quaternary structure, homodimer.

It catalyses the reaction XMP + L-glutamine + ATP + H2O = GMP + L-glutamate + AMP + diphosphate + 2 H(+). The protein operates within purine metabolism; GMP biosynthesis; GMP from XMP (L-Gln route): step 1/1. In terms of biological role, catalyzes the synthesis of GMP from XMP. This is GMP synthase [glutamine-hydrolyzing] from Bacillus anthracis (strain A0248).